The sequence spans 931 residues: Isoleucine--tRNA ligase (931 aa).

Positions 58–68 (PYANGHLHCGH) match the 'HIGH' region motif. Residue E559 participates in L-isoleucyl-5'-AMP binding. The 'KMSKS' region signature appears at 600–604 (KLSKS). K603 lines the ATP pocket. 4 residues coordinate Zn(2+): C894, C897, C914, and C917.

This sequence belongs to the class-I aminoacyl-tRNA synthetase family. IleS type 1 subfamily. As to quaternary structure, monomer. Requires Zn(2+) as cofactor.

It is found in the cytoplasm. It carries out the reaction tRNA(Ile) + L-isoleucine + ATP = L-isoleucyl-tRNA(Ile) + AMP + diphosphate. Catalyzes the attachment of isoleucine to tRNA(Ile). As IleRS can inadvertently accommodate and process structurally similar amino acids such as valine, to avoid such errors it has two additional distinct tRNA(Ile)-dependent editing activities. One activity is designated as 'pretransfer' editing and involves the hydrolysis of activated Val-AMP. The other activity is designated 'posttransfer' editing and involves deacylation of mischarged Val-tRNA(Ile). The polypeptide is Isoleucine--tRNA ligase (Legionella pneumophila (strain Corby)).